We begin with the raw amino-acid sequence, 268 residues long: Tryptophan synthase alpha chain (268 aa).

Active-site proton acceptor residues include Glu49 and Asp60.

This sequence belongs to the TrpA family. In terms of assembly, tetramer of two alpha and two beta chains.

The enzyme catalyses (1S,2R)-1-C-(indol-3-yl)glycerol 3-phosphate + L-serine = D-glyceraldehyde 3-phosphate + L-tryptophan + H2O. It functions in the pathway amino-acid biosynthesis; L-tryptophan biosynthesis; L-tryptophan from chorismate: step 5/5. Functionally, the alpha subunit is responsible for the aldol cleavage of indoleglycerol phosphate to indole and glyceraldehyde 3-phosphate. This chain is Tryptophan synthase alpha chain, found in Escherichia coli (strain SMS-3-5 / SECEC).